Reading from the N-terminus, the 160-residue chain is Cytochrome b6-f complex subunit 4 (160 aa).

The next 3 membrane-spanning stretches (helical) occupy residues 36–56, 95–115, and 128–148; these read LLYIFPVVILGTIACVVGLAV, LLGIALQTLVPLGLMLVPFIE, and VAMTVFLFGTFTTIYLGIGAA.

It belongs to the cytochrome b family. PetD subfamily. The 4 large subunits of the cytochrome b6-f complex are cytochrome b6, subunit IV (17 kDa polypeptide, PetD), cytochrome f and the Rieske protein, while the 4 small subunits are PetG, PetL, PetM and PetN. The complex functions as a dimer.

It is found in the cellular thylakoid membrane. Component of the cytochrome b6-f complex, which mediates electron transfer between photosystem II (PSII) and photosystem I (PSI), cyclic electron flow around PSI, and state transitions. The polypeptide is Cytochrome b6-f complex subunit 4 (Synechococcus sp. (strain CC9902)).